We begin with the raw amino-acid sequence, 772 residues long: TBC domain-containing protein C4G8.04 (772 aa).

Over residues 143-161 (SFFPSSQEPSIPENPSSLT) the composition is skewed to polar residues. Disordered regions lie at residues 143 to 163 (SFFP…LTGE) and 275 to 294 (KFFR…TFVS). The span at 275 to 291 (KFFRSSPRCSTPSVSST) shows a compositional bias: low complexity. Thr395 bears the Phosphothreonine mark. In terms of domain architecture, Rab-GAP TBC spans 504-693 (GVPLCYKAKV…RIFDMLFCDG (190 aa)).

The chain is TBC domain-containing protein C4G8.04 from Schizosaccharomyces pombe (strain 972 / ATCC 24843) (Fission yeast).